The chain runs to 203 residues: MGVAQISSAITPAQPAELYPGDIKSVLLTAEQIQARIAELGREIGDNYRDAAAETGQDLLLITVLKGAVIFVTDLARAIPLPTQFEFMAVSSYGSSTSSSGVVRILKDLDRDIQGRDVLIVEDVVDSGLTLSWLLRNLSTRHPRSLRVCTLLRKPDARGAHVDIAYVGFDIPNDFVVGYGLDYDERYRDLSYIGTLDPRVYQQ.

K66 and G67 together coordinate diphosphate. Residues E122 and D123 each coordinate Mg(2+). The Proton acceptor role is filled by D126. Residues K154, 175–176 (FV), and D182 contribute to the GMP site. R188 is a binding site for diphosphate.

It belongs to the purine/pyrimidine phosphoribosyltransferase family. The cofactor is Mg(2+).

The protein localises to the cytoplasm. The enzyme catalyses IMP + diphosphate = hypoxanthine + 5-phospho-alpha-D-ribose 1-diphosphate. The catalysed reaction is GMP + diphosphate = guanine + 5-phospho-alpha-D-ribose 1-diphosphate. It participates in purine metabolism; IMP biosynthesis via salvage pathway; IMP from hypoxanthine: step 1/1. The protein operates within purine metabolism; GMP biosynthesis via salvage pathway; GMP from guanine: step 1/1. Purine salvage pathway enzyme that catalyzes the transfer of the ribosyl-5-phosphate group from 5-phospho-alpha-D-ribose 1-diphosphate (PRPP) to the N9 position of the 6-oxopurines hypoxanthine and guanine to form the corresponding ribonucleotides IMP (inosine 5'-monophosphate) and GMP (guanosine 5'-monophosphate), with the release of PPi. The protein is Hypoxanthine-guanine phosphoribosyltransferase (hpt) of Mycobacterium avium.